Reading from the N-terminus, the 133-residue chain is ATP synthase epsilon chain (133 aa).

It belongs to the ATPase epsilon chain family. F-type ATPases have 2 components, CF(1) - the catalytic core - and CF(0) - the membrane proton channel. CF(1) has five subunits: alpha(3), beta(3), gamma(1), delta(1), epsilon(1). CF(0) has three main subunits: a, b and c.

The protein resides in the cell inner membrane. In terms of biological role, produces ATP from ADP in the presence of a proton gradient across the membrane. The chain is ATP synthase epsilon chain from Maricaulis maris (strain MCS10) (Caulobacter maris).